Here is a 258-residue protein sequence, read N- to C-terminus: Small ribosomal subunit protein uS2 (258 aa).

Positions 226–258 (KQGQDDEETLEVDFKENADGSEEIVSAEENPED) are disordered. Residues 244–258 (DGSEEIVSAEENPED) show a composition bias toward acidic residues.

The protein belongs to the universal ribosomal protein uS2 family.

The sequence is that of Small ribosomal subunit protein uS2 from Lactobacillus acidophilus (strain ATCC 700396 / NCK56 / N2 / NCFM).